The sequence spans 549 residues: Probable protein kinase UbiB (549 aa).

Positions 123–501 (NFDDTPLASA…QQKAHKSNYL (379 aa)) constitute a Protein kinase domain. ATP contacts are provided by residues 129–137 (LASASISQV) and Lys152. The Proton acceptor role is filled by Asp287. 2 consecutive transmembrane segments (helical) span residues 498–518 (SNYL…LFSQ) and 520–540 (ATLW…LLGW).

This sequence belongs to the ABC1 family. UbiB subfamily.

The protein localises to the cell inner membrane. It participates in cofactor biosynthesis; ubiquinone biosynthesis [regulation]. In terms of biological role, is probably a protein kinase regulator of UbiI activity which is involved in aerobic coenzyme Q (ubiquinone) biosynthesis. The protein is Probable protein kinase UbiB of Shewanella loihica (strain ATCC BAA-1088 / PV-4).